A 198-amino-acid chain; its full sequence is dTTP/UTP pyrophosphatase (198 aa).

The active-site Proton acceptor is Asp78.

Belongs to the Maf family. YhdE subfamily. A divalent metal cation is required as a cofactor.

It is found in the cytoplasm. It catalyses the reaction dTTP + H2O = dTMP + diphosphate + H(+). The catalysed reaction is UTP + H2O = UMP + diphosphate + H(+). Nucleoside triphosphate pyrophosphatase that hydrolyzes dTTP and UTP. May have a dual role in cell division arrest and in preventing the incorporation of modified nucleotides into cellular nucleic acids. The polypeptide is dTTP/UTP pyrophosphatase (Chromobacterium violaceum (strain ATCC 12472 / DSM 30191 / JCM 1249 / CCUG 213 / NBRC 12614 / NCIMB 9131 / NCTC 9757 / MK)).